The chain runs to 169 residues: uncharacterized protein (169 aa).

The chain crosses the membrane as a helical span at residues 55–77; the sequence is SLFIFKAVMILHTCLIVKSIRIF.

The protein localises to the membrane. This is an uncharacterized protein from Saccharomyces cerevisiae (strain ATCC 204508 / S288c) (Baker's yeast).